A 654-amino-acid polypeptide reads, in one-letter code: Translation factor GUF1, mitochondrial (654 aa).

A tr-type G domain is found at 57–237; sequence ENYRNFSIVA…SVIKNIPSPV (181 aa). Residues 66–73, 130–134, and 184–187 contribute to the GTP site; these read AHVDHGKS, DTPGH, and NKID.

The protein belongs to the TRAFAC class translation factor GTPase superfamily. Classic translation factor GTPase family. LepA subfamily.

It is found in the mitochondrion inner membrane. It carries out the reaction GTP + H2O = GDP + phosphate + H(+). Its function is as follows. Promotes mitochondrial protein synthesis. May act as a fidelity factor of the translation reaction, by catalyzing a one-codon backward translocation of tRNAs on improperly translocated ribosomes. Binds to mitochondrial ribosomes in a GTP-dependent manner. The protein is Translation factor GUF1, mitochondrial of Candida dubliniensis (strain CD36 / ATCC MYA-646 / CBS 7987 / NCPF 3949 / NRRL Y-17841) (Yeast).